The chain runs to 226 residues: Ribonuclease 3 (226 aa).

An RNase III domain is found at 7 to 129 (LPRLCRTLGY…IIGAVYLDSD (123 aa)). Glu-42 contributes to the Mg(2+) binding site. Asp-46 is a catalytic residue. Mg(2+) contacts are provided by Asp-115 and Glu-118. Glu-118 is a catalytic residue. The DRBM domain occupies 156-226 (DAKTLLQEHL…AAQVLELLKK (71 aa)).

It belongs to the ribonuclease III family. As to quaternary structure, homodimer. Mg(2+) serves as cofactor.

It localises to the cytoplasm. The catalysed reaction is Endonucleolytic cleavage to 5'-phosphomonoester.. In terms of biological role, digests double-stranded RNA. Involved in the processing of primary rRNA transcript to yield the immediate precursors to the large and small rRNAs (23S and 16S). Processes some mRNAs, and tRNAs when they are encoded in the rRNA operon. Processes pre-crRNA and tracrRNA of type II CRISPR loci if present in the organism. This chain is Ribonuclease 3, found in Shewanella baltica (strain OS185).